The sequence spans 366 residues: MYGILVLEDGTIIRGDGFGAETEVLGELVFNTSMTGYVEILTDPSYKGQIVTMTYPLEGNYGVEKEWFESDGIKAEGFVVKDMTGLKLDEFLKEYNIPGISGVDTRYITRKIRSKGVIRSLLKTSTNPITKDEETELIKKVVEYPDISEIDLVPEVSTKETVVYSADDEKTKCVLIDCGVKQSIVNCLVERGCSVIKVPYNSKKEEILSYTPDFVLVSNGPGDPENMAETVDTVKNLIGTLPVTGICLGHQIITIALGGKTYKLKFGHRGGNQPVKDIESGKVYITSQNHGFATDDCVVPTGSELMHMNLNDDTVEGIRKIESEDLKNTVWSVQYHPEAGPGPHDARFLFDEMVELGIKFKAEKAN.

The CPSase stretch occupies residues M1–D168. S45, G220, and G222 together coordinate L-glutamine. The 192-residue stretch at K172 to E363 folds into the Glutamine amidotransferase type-1 domain. C247 functions as the Nucleophile in the catalytic mechanism. L-glutamine contacts are provided by L248, Q251, N289, G291, and F292. Catalysis depends on residues H336 and E338.

The protein belongs to the CarA family. Composed of two chains; the small (or glutamine) chain promotes the hydrolysis of glutamine to ammonia, which is used by the large (or ammonia) chain to synthesize carbamoyl phosphate. Tetramer of heterodimers (alpha,beta)4.

It catalyses the reaction hydrogencarbonate + L-glutamine + 2 ATP + H2O = carbamoyl phosphate + L-glutamate + 2 ADP + phosphate + 2 H(+). It carries out the reaction L-glutamine + H2O = L-glutamate + NH4(+). Its pathway is amino-acid biosynthesis; L-arginine biosynthesis; carbamoyl phosphate from bicarbonate: step 1/1. It functions in the pathway pyrimidine metabolism; UMP biosynthesis via de novo pathway; (S)-dihydroorotate from bicarbonate: step 1/3. Small subunit of the glutamine-dependent carbamoyl phosphate synthetase (CPSase). CPSase catalyzes the formation of carbamoyl phosphate from the ammonia moiety of glutamine, carbonate, and phosphate donated by ATP, constituting the first step of 2 biosynthetic pathways, one leading to arginine and/or urea and the other to pyrimidine nucleotides. The small subunit (glutamine amidotransferase) binds and cleaves glutamine to supply the large subunit with the substrate ammonia. This chain is Carbamoyl phosphate synthase small chain, found in Methanococcus maripaludis (strain C6 / ATCC BAA-1332).